Reading from the N-terminus, the 506-residue chain is Fe(3+)-transport system permease protein FbpB 2 (506 aa).

The next 12 helical transmembrane spans lie at 9–29 (LTLL…YVIL), 57–77 (LLMV…AFLL), 90–110 (VAMT…WISL), 116–136 (VFWG…YLPV), 174–194 (IGSS…AVSI), 218–238 (ALLS…EIFF), 275–295 (IFIL…IVGT), 314–334 (FIIS…LVWA), 350–370 (PYLL…YFSI), 379–399 (TFFV…QTTL), 428–448 (LTLP…FLNL), and 480–500 (AAAT…VFLL). The region spanning 52-233 (LSNTMLLMVC…LMAICILIVF (182 aa)) is the ABC transmembrane type-1 1 domain. One can recognise an ABC transmembrane type-1 2 domain in the interval 310-500 (FSNSFIISGL…LFSGIPVFLL (191 aa)).

It belongs to the binding-protein-dependent transport system permease family. FbpB subfamily. The complex is composed of two ATP-binding proteins (FbpC), two transmembrane proteins (FbpB) and a solute-binding protein (FbpA).

It localises to the cell inner membrane. Its function is as follows. Part of the ABC transporter complex FbpABC (TC 3.A.1.10.1) involved in Fe(3+) ions import. Probably responsible for the translocation of the substrate across the membrane. The polypeptide is Fe(3+)-transport system permease protein FbpB 2 (fbpB2) (Haemophilus influenzae (strain ATCC 51907 / DSM 11121 / KW20 / Rd)).